A 127-amino-acid chain; its full sequence is Glycine cleavage system H protein (127 aa).

In terms of domain architecture, Lipoyl-binding spans 22–104 (KVRIGITDFA…YEKAWMIVVE (83 aa)). Position 63 is an N6-lipoyllysine (Lys-63).

It belongs to the GcvH family. The glycine cleavage system is composed of four proteins: P, T, L and H. Requires (R)-lipoate as cofactor.

Its function is as follows. The glycine cleavage system catalyzes the degradation of glycine. The H protein shuttles the methylamine group of glycine from the P protein to the T protein. Functionally, is also involved in protein lipoylation via its role as an octanoyl/lipoyl carrier protein intermediate. The polypeptide is Glycine cleavage system H protein (Bacillus licheniformis (strain ATCC 14580 / DSM 13 / JCM 2505 / CCUG 7422 / NBRC 12200 / NCIMB 9375 / NCTC 10341 / NRRL NRS-1264 / Gibson 46)).